Here is a 287-residue protein sequence, read N- to C-terminus: uncharacterized protein (287 aa).

GTP is bound by residues 43 to 50, 90 to 93, and 156 to 159; these read GKTGAGKS, DLPG, and DKAE. The G domain maps to 48–140; the sequence is GKSSLCNALF…TDEHFYRQVI (93 aa).

To E.coli YkfA and YeeP.

This is an uncharacterized protein from Escherichia coli (strain K12).